A 482-amino-acid chain; its full sequence is tRNA sulfurtransferase (482 aa).

The region spanning 61 to 165 (LAIRDALTRI…DDRLLLIKGR (105 aa)) is the THUMP domain. Residues 183 to 184 (LI), lysine 265, glycine 287, and glutamine 296 each bind ATP. A disulfide bond links cysteine 344 and cysteine 456. Positions 404-482 (FGPNDVILDI…GFENVKVYRP (79 aa)) constitute a Rhodanese domain. Cysteine 456 acts as the Cysteine persulfide intermediate in catalysis.

It belongs to the ThiI family.

It localises to the cytoplasm. It carries out the reaction [ThiI sulfur-carrier protein]-S-sulfanyl-L-cysteine + a uridine in tRNA + 2 reduced [2Fe-2S]-[ferredoxin] + ATP + H(+) = [ThiI sulfur-carrier protein]-L-cysteine + a 4-thiouridine in tRNA + 2 oxidized [2Fe-2S]-[ferredoxin] + AMP + diphosphate. It catalyses the reaction [ThiS sulfur-carrier protein]-C-terminal Gly-Gly-AMP + S-sulfanyl-L-cysteinyl-[cysteine desulfurase] + AH2 = [ThiS sulfur-carrier protein]-C-terminal-Gly-aminoethanethioate + L-cysteinyl-[cysteine desulfurase] + A + AMP + 2 H(+). Its pathway is cofactor biosynthesis; thiamine diphosphate biosynthesis. Its function is as follows. Catalyzes the ATP-dependent transfer of a sulfur to tRNA to produce 4-thiouridine in position 8 of tRNAs, which functions as a near-UV photosensor. Also catalyzes the transfer of sulfur to the sulfur carrier protein ThiS, forming ThiS-thiocarboxylate. This is a step in the synthesis of thiazole, in the thiamine biosynthesis pathway. The sulfur is donated as persulfide by IscS. The chain is tRNA sulfurtransferase from Salmonella enteritidis PT4 (strain P125109).